The primary structure comprises 213 residues: von Hippel-Lindau disease tumor suppressor (213 aa).

The segment at Met-1–Ser-65 is disordered. Over residues Trp-8–Met-54 the composition is skewed to acidic residues. 8 tandem repeats follow at residues Gly-14–Ala-18, Gly-19–Tyr-23, Gly-24–Asp-28, Gly-29–Ser-33, Gly-34–Ser-38, Gly-39–Ser-43, Gly-44–Leu-48, and Gly-49–Glu-53. The 8 X 5 AA tandem repeats of G-[PAVG]-E-E-[DAYSLE] stretch occupies residues Gly-14–Glu-53. The involved in binding to CCT complex stretch occupies residues Thr-100–Val-155. Residues Thr-157–Val-166 form an interaction with Elongin BC complex region.

Belongs to the VHL family. In terms of assembly, component of the VCB (VHL-Elongin BC-CUL2) complex; this complex acts as a ubiquitin-ligase E3 and directs proteasome-dependent degradation of targeted proteins. Interacts with CUL2; this interaction is dependent on the integrity of the trimeric VCB complex. Interacts (via the beta domain) with HIF1A (via the NTAD domain); this interaction mediates degradation of HIF1A in normoxia and, in hypoxia, prevents ubiquitination and degradation of HIF1A by mediating hypoxia-induced translocation to the nucleus, a process which requires a hypoxia-dependent regulatory signal. Interacts with ADRB2; the interaction, in normoxia, is dependent on hydroxylation of ADRB2 and the subsequent VCB-mediated ubiquitination and degradation of ADRB2. Under hypoxia, hydroxylation, interaction with VHL, ubiquitination and subsequent degradation of ADRB2 are dramatically decreased. Interacts with RNF139, USP33 and JADE1. Found in a complex composed of LIMD1, VHL, EGLN1/PHD2, ELOB and CUL2. Isoform 1 and isoform 3 interact with LIMD1 (via LIM zinc-binding 2), AJUBA (via LIM domains) and WTIP (via LIM domains). Interacts with EPAS1. Interacts with CARD9. Interacts with DCUN1D1 independently of CUL2; this interaction engages DCUN1D1 in the VCB complex and triggers CUL2 neddylation and consequently cullin ring ligase (CRL) substrates polyubiquitylation. Interacts with ALAS1 (hydroxylated form). Interacts with IGFBP1. In terms of tissue distribution, expressed in the adult and fetal brain and kidney.

Its subcellular location is the cytoplasm. It is found in the cell membrane. It localises to the endoplasmic reticulum. The protein resides in the nucleus. Its pathway is protein modification; protein ubiquitination. Functionally, involved in the ubiquitination and subsequent proteasomal degradation via the von Hippel-Lindau ubiquitination complex. Seems to act as a target recruitment subunit in the E3 ubiquitin ligase complex and recruits hydroxylated hypoxia-inducible factor (HIF) under normoxic conditions. Involved in transcriptional repression through interaction with HIF1A, HIF1AN and histone deacetylases. Ubiquitinates, in an oxygen-responsive manner, ADRB2. Acts as a negative regulator of mTORC1 by promoting ubiquitination and degradation of RPTOR. This is von Hippel-Lindau disease tumor suppressor (VHL) from Homo sapiens (Human).